A 673-amino-acid chain; its full sequence is UvrABC system protein B (673 aa).

The Helicase ATP-binding domain occupies 26–183; that stretch reads EGLEDGLAHQ…RRLAELQYTR (158 aa). 39–46 provides a ligand contact to ATP; sequence GVTGSGKT. The Beta-hairpin signature appears at 92 to 115; it reads YYDYYQPEAYVPSSDTFIEKDASV. The region spanning 431-597 is the Helicase C-terminal domain; it reads QVDDLLSEIR…GLNKKVVDIL (167 aa). In terms of domain architecture, UVR spans 633–668; sequence QQKIHELEGQMMQHAQNLEFEEAAEIRDQLHQLREL.

The protein belongs to the UvrB family. In terms of assembly, forms a heterotetramer with UvrA during the search for lesions. Interacts with UvrC in an incision complex.

The protein resides in the cytoplasm. In terms of biological role, the UvrABC repair system catalyzes the recognition and processing of DNA lesions. A damage recognition complex composed of 2 UvrA and 2 UvrB subunits scans DNA for abnormalities. Upon binding of the UvrA(2)B(2) complex to a putative damaged site, the DNA wraps around one UvrB monomer. DNA wrap is dependent on ATP binding by UvrB and probably causes local melting of the DNA helix, facilitating insertion of UvrB beta-hairpin between the DNA strands. Then UvrB probes one DNA strand for the presence of a lesion. If a lesion is found the UvrA subunits dissociate and the UvrB-DNA preincision complex is formed. This complex is subsequently bound by UvrC and the second UvrB is released. If no lesion is found, the DNA wraps around the other UvrB subunit that will check the other stand for damage. The chain is UvrABC system protein B from Citrobacter koseri (strain ATCC BAA-895 / CDC 4225-83 / SGSC4696).